A 140-amino-acid polypeptide reads, in one-letter code: Large ribosomal subunit protein uL11 (140 aa).

This sequence belongs to the universal ribosomal protein uL11 family. In terms of assembly, part of the ribosomal stalk of the 50S ribosomal subunit. Interacts with L10 and the large rRNA to form the base of the stalk. L10 forms an elongated spine to which L12 dimers bind in a sequential fashion forming a multimeric L10(L12)X complex. One or more lysine residues are methylated.

In terms of biological role, forms part of the ribosomal stalk which helps the ribosome interact with GTP-bound translation factors. The sequence is that of Large ribosomal subunit protein uL11 from Geotalea daltonii (strain DSM 22248 / JCM 15807 / FRC-32) (Geobacter daltonii).